A 152-amino-acid polypeptide reads, in one-letter code: UPF0178 protein swp_1285 (152 aa).

Belongs to the UPF0178 family.

The chain is UPF0178 protein swp_1285 from Shewanella piezotolerans (strain WP3 / JCM 13877).